The sequence spans 942 residues: Chitin synthase 4 (942 aa).

A disordered region spans residues M1–L124. The span at D14–T26 shows a compositional bias: basic and acidic residues. Positions A27–H36 are enriched in polar residues. The N-linked (GlcNAc...) asparagine glycan is linked to N604. The next 7 helical transmembrane spans lie at T641–L661, V674–S694, A709–V729, I755–E775, I783–A803, V885–I905, and T909–G929.

Belongs to the chitin synthase family. Class I subfamily.

The protein localises to the cell membrane. It localises to the cytoplasmic vesicle membrane. It catalyses the reaction [(1-&gt;4)-N-acetyl-beta-D-glucosaminyl](n) + UDP-N-acetyl-alpha-D-glucosamine = [(1-&gt;4)-N-acetyl-beta-D-glucosaminyl](n+1) + UDP + H(+). Polymerizes chitin, a structural polymer of the cell wall and septum, by transferring the sugar moiety of UDP-GlcNAc to the non-reducing end of the growing chitin polymer. This chain is Chitin synthase 4, found in Mycosarcoma maydis (Corn smut fungus).